We begin with the raw amino-acid sequence, 249 residues long: Molybdate/tungstate transport system permease protein WtpB (249 aa).

The Cytoplasmic portion of the chain corresponds to 1–5 (MEKFD). The chain crosses the membrane as a helical span at residues 6–26 (IAMTVFLVMIFLFIFLPIIYM). Residues 27-48 (LSNPGDLNQLLDKEVIEAFKTT) lie on the Extracellular side of the membrane. The ABC transmembrane type-1 domain maps to 45 to 240 (FKTTLLAGAV…LISIALFALL (196 aa)). A helical transmembrane segment spans residues 49–69 (LLAGAVATLIALIFGIPTGYI). At 70-93 (LARYDFKFKSFVEAVLDLPMAIPH) the chain is on the cytoplasmic side. A helical membrane pass occupies residues 94-114 (SVIGIIILSFIYGIDIINFIG). Topologically, residues 115-116 (RY) are extracellular. The chain crosses the membrane as a helical span at residues 117 to 137 (VVDNFWGIVTVYLFVGIPFMV). Topologically, residues 138–177 (NSIRDGFLSVDEEIEYVSRTLGASKIRTFFEISLPLIKNN) are cytoplasmic. A helical transmembrane segment spans residues 178–198 (IISGIILSFARGISEVGAILI). Residues 199–223 (IAYYPKTVPILIYERFMSFGLDASK) lie on the Extracellular side of the membrane. The chain crosses the membrane as a helical span at residues 224 to 244 (PISVGMILISIALFALLRMFG). At 245–249 (RMRGR) the chain is on the cytoplasmic side.

Belongs to the binding-protein-dependent transport system permease family. In terms of assembly, the complex is composed of two ATP-binding proteins (WtpC), two transmembrane proteins (WtpB) and a solute-binding protein (WtpA).

Its subcellular location is the cell membrane. In terms of biological role, part of the ABC transporter complex WtpABC involved in molybdate/tungstate import. Probably responsible for the translocation of the substrate across the membrane. This is Molybdate/tungstate transport system permease protein WtpB (wtpB) from Methanocaldococcus jannaschii (strain ATCC 43067 / DSM 2661 / JAL-1 / JCM 10045 / NBRC 100440) (Methanococcus jannaschii).